The sequence spans 313 residues: Adhesin MafA 2/3 (313 aa).

An N-terminal signal peptide occupies residues M1–A14. Residue C15 is the site of N-palmitoyl cysteine attachment. C15 is lipidated: S-diacylglycerol cysteine. Over residues G282–K298 the composition is skewed to polar residues. Positions G282–G313 are disordered.

It belongs to the MafA family.

Its subcellular location is the cell outer membrane. The polypeptide is Adhesin MafA 2/3 (mafA2) (Neisseria gonorrhoeae (strain ATCC 700825 / FA 1090)).